A 732-amino-acid chain; its full sequence is Adducin-related protein 1 (732 aa).

Disordered regions lie at residues 1–22 and 684–732; these read MIGR…DPEY and TRFS…KKDK. Over residues 685–705 the composition is skewed to polar residues; sequence RFSSTQGTSEGNTTSRSCTTA. Over residues 716–732 the composition is skewed to basic residues; the sequence is KKKKKKGFLSFMRKKDK.

Belongs to the aldolase class II family. Adducin subfamily.

The protein resides in the cytoplasm. It localises to the cytoskeleton. It is found in the cell membrane. Membrane-cytoskeleton-associated protein that promotes the assembly of the spectrin-actin network. Plays a role in time-dependent memmory loss and the retention of conditioned behavior over time. The sequence is that of Adducin-related protein 1 from Caenorhabditis elegans.